A 485-amino-acid polypeptide reads, in one-letter code: Auxin transporter protein 1 (485 aa).

Residues 1–59 lie on the Cytoplasmic side of the membrane; it reads MSEGVEAIVANDNGTDQVNGNRTGKDNEEHDGSTGSNLSNFLWHGGSVWDAWFSCASNQ. Polar residues predominate over residues 12-22; it reads DNGTDQVNGNR. Residues 12–33 are disordered; that stretch reads DNGTDQVNGNRTGKDNEEHDGS. Over residues 23–32 the composition is skewed to basic and acidic residues; that stretch reads TGKDNEEHDG. The chain crosses the membrane as a helical span at residues 60 to 77; that stretch reads VAQVLLTLPYSFSQLGML. Over 78 to 79 the chain is Extracellular; the sequence is SG. A helical membrane pass occupies residues 80-100; that stretch reads IVLQIFYGLLGSWTAYLISVL. At 101–135 the chain is on the cytoplasmic side; that stretch reads YVEYRARKEKEGKSFKNHVIQWFEVLDGLLGSYWK. Residues 136-156 traverse the membrane as a helical segment; it reads ALGLAFNCTFLLFGSVIQLIA. The Extracellular portion of the chain corresponds to 157 to 172; it reads CASNIYYINDHLDKRT. Residues 173 to 193 traverse the membrane as a helical segment; sequence WTYIFGACCATTVFIPSFHNY. The Cytoplasmic portion of the chain corresponds to 194-196; the sequence is RIW. Residues 197–217 form a helical membrane-spanning segment; it reads SFLGLGMTTYTAWYLAIASII. Topologically, residues 218–232 are extracellular; the sequence is HGQAEGVKHSGPTKL. Residues 233 to 253 form a helical membrane-spanning segment; it reads VLYFTGATNILYTFGGHAVTV. Topologically, residues 254–266 are cytoplasmic; the sequence is EIMHAMWKPQKFK. The chain crosses the membrane as a helical span at residues 267-287; the sequence is YIYLMATLYVFTLTIPSAAAV. Over 288-314 the chain is Extracellular; sequence YWAFGDALLDHSNAFSLMPKNAWRDAA. Residues 315 to 335 traverse the membrane as a helical segment; sequence VILMLIHQFITFGFACTPLYF. The Cytoplasmic segment spans residues 336–356; it reads VWEKVIGMHDTKSICLRALAR. A helical membrane pass occupies residues 357–377; it reads LPVVIPIWFLAIIFPFFGPIN. Residue Ser378 is a topological domain, extracellular. Residues 379-399 traverse the membrane as a helical segment; that stretch reads AVGALLVSFTVYIIPSLAHML. At 400–425 the chain is on the cytoplasmic side; sequence TYRSASARQNAAEKPPFFMPSWTAMY. Residues 426 to 446 traverse the membrane as a helical segment; sequence VLNAFVVVWVLIVGFGFGGWA. Over 447–485 the chain is Extracellular; sequence SVTNFVRQVDTFGLFAKCYQCKPAAAAAHAPVSALHHRL.

The protein belongs to the amino acid/polyamine transporter 2 family. Amino acid/auxin permease (AAAP) (TC 2.A.18.1) subfamily. In terms of tissue distribution, expressed in root and shoot apical tissues. In root apex, confined to stele initials, protophloem poles, statolith-containing S2 columella cells, lateral root cap cells (LRC), and in epidermal cells from the distal elongation zone (DEZ) up to central elongation zone (CEZ).

It is found in the cell membrane. Auxin uptake mediated by AUX1 is inhibited by chromosaponin-1 (CSI), 1-naphthoxyacetic acid (1-NOA) and 3-chloro-4-hydroxyphenylacetic acid (CHPAA). Functionally, carrier protein involved in proton-driven auxin influx. Mediates the formation of auxin gradient from developing leaves (site of auxin biosynthesis) to tips by contributing to the loading of auxin in vascular tissues and facilitating acropetal (base to tip) auxin transport within inner tissues of the root apex, and basipetal (tip to base) auxin transport within outer tissues of the root apex. Unloads auxin from the mature phloem to deliver the hormone to the root meristem via the protophloem cell files. Coordinated subcellular localization of AUX1 is regulated by a brefeldin A-sensitive (BFA) vesicle trafficking process. Involved in lateral root formation, trichoblast polarization and root hair elongation. Required for gravitropism and thigmotropism, especially in roots, by modulating responses to auxin, ethylene and cytokinins such as benzyladenine (BA). Needed for ammonium-mediated root-growth inhibition. Confers sensitivity to the herbicide 2,4-dichlorophenoxyacetic acid (2,4-D, auxin analog), and to polar auxin transport inhibitors such as N-1-naphthylphthalamic acid (NPA) and 2,3,5-triiodobenzoic acid (TIBA). This chain is Auxin transporter protein 1 (AUX1), found in Arabidopsis thaliana (Mouse-ear cress).